The primary structure comprises 148 residues: Probable calcium-binding protein CML7 (148 aa).

EF-hand domains are found at residues 9–44 (EQVA…LGGN), 80–115 (PFDR…IGEK), and 116–148 (LEPH…IVAK). Ca(2+) contacts are provided by D22, D24, D26, R28, E33, D93, D95, S97, T99, and D104.

Potential calcium sensor. In Oryza sativa subsp. japonica (Rice), this protein is Probable calcium-binding protein CML7 (CML7).